Here is a 384-residue protein sequence, read N- to C-terminus: UDP-galactopyranose mutase (384 aa).

Residues 1-23 (MKSKKILIVGAGFSGAVIGRQLA) form the signal peptide. Residues S14, 33–34 (DQ), N41, and 60–61 (HI) contribute to the FAD site. The UDP-alpha-D-galactose site is built by N84, F151, T156, W160, and Y185. F219 lines the FAD pocket. UDP-alpha-D-galactose-binding residues include N270, R280, and Y314. R343 contributes to the FAD binding site. A UDP-alpha-D-galactose-binding site is contributed by Y349. FAD is bound at residue 350–355 (LDMDVT).

Belongs to the UDP-galactopyranose/dTDP-fucopyranose mutase family. Homodimer. FAD serves as cofactor.

The enzyme catalyses UDP-alpha-D-galactose = UDP-alpha-D-galactofuranose. It participates in bacterial outer membrane biogenesis; LPS O-antigen biosynthesis. Involved in the biosynthesis of the galactose-containing O-side-chain polysaccharide backbone structure of D-galactan I which is a key component of lipopolysaccharide (LPS). Catalyzes the interconversion through a 2-keto intermediate of uridine diphosphogalactopyranose (UDP-GalP) into uridine diphosphogalactofuranose (UDP-GalF) which is the biosynthetic precursor of galactofuranosyl residues. The sequence is that of UDP-galactopyranose mutase (rfbD) from Klebsiella pneumoniae.